Reading from the N-terminus, the 390-residue chain is Galactokinase (390 aa).

34–37 (EHTD) is a binding site for substrate. Residues Ser68 and 122-128 (GSGLSSS) contribute to the ATP site. Residues Ser128 and Glu160 each coordinate Mg(2+). Catalysis depends on Asp172, which acts as the Proton acceptor. Residue Tyr221 coordinates substrate.

Belongs to the GHMP kinase family. GalK subfamily.

The protein localises to the cytoplasm. The catalysed reaction is alpha-D-galactose + ATP = alpha-D-galactose 1-phosphate + ADP + H(+). It functions in the pathway carbohydrate metabolism; galactose metabolism. In terms of biological role, catalyzes the transfer of the gamma-phosphate of ATP to D-galactose to form alpha-D-galactose-1-phosphate (Gal-1-P). This is Galactokinase from Chloroflexus aggregans (strain MD-66 / DSM 9485).